Reading from the N-terminus, the 226-residue chain is MNENLFASFITPTLMGLPIVLLIIMFPNLLFPSPTRLMNNRLVSFQQWLIQLVLKQMMAMHNPKGRTWSLMLISLIMFIGSTNLLGLLPHSFTPTTQLSMNLGMAIPLWAGAVITGFRHKTKASLAHFLPQGTPIPLIPMLIIIETISLFIQPMALAVRLTANITAGHLLMHLIGGATLVLTSISPPTAILTFIILVLLTMLEFAVALIQAYVFTLLVSLYLHDNT.

6 helical membrane-spanning segments follow: residues 6–26, 68–88, 97–117, 138–158, 164–184, and 189–209; these read FASFITPTLMGLPIVLLIIMF, WSLMLISLIMFIGSTNLLGLL, QLSMNLGMAIPLWAGAVITGF, IPMLIIIETISLFIQPMALAV, ITAGHLLMHLIGGATLVLTSI, and AILTFIILVLLTMLEFAVALI.

Belongs to the ATPase A chain family. As to quaternary structure, component of the ATP synthase complex composed at least of ATP5F1A/subunit alpha, ATP5F1B/subunit beta, ATP5MC1/subunit c (homooctomer), MT-ATP6/subunit a, MT-ATP8/subunit 8, ATP5ME/subunit e, ATP5MF/subunit f, ATP5MG/subunit g, ATP5MK/subunit k, ATP5MJ/subunit j, ATP5F1C/subunit gamma, ATP5F1D/subunit delta, ATP5F1E/subunit epsilon, ATP5PF/subunit F6, ATP5PB/subunit b, ATP5PD/subunit d, ATP5PO/subunit OSCP. ATP synthase complex consists of a soluble F(1) head domain (subunits alpha(3) and beta(3)) - the catalytic core - and a membrane F(0) domain - the membrane proton channel (subunits c, a, 8, e, f, g, k and j). These two domains are linked by a central stalk (subunits gamma, delta, and epsilon) rotating inside the F1 region and a stationary peripheral stalk (subunits F6, b, d, and OSCP). Interacts with DNAJC30; interaction is direct.

The protein resides in the mitochondrion inner membrane. It carries out the reaction H(+)(in) = H(+)(out). In terms of biological role, subunit a, of the mitochondrial membrane ATP synthase complex (F(1)F(0) ATP synthase or Complex V) that produces ATP from ADP in the presence of a proton gradient across the membrane which is generated by electron transport complexes of the respiratory chain. ATP synthase complex consist of a soluble F(1) head domain - the catalytic core - and a membrane F(1) domain - the membrane proton channel. These two domains are linked by a central stalk rotating inside the F(1) region and a stationary peripheral stalk. During catalysis, ATP synthesis in the catalytic domain of F(1) is coupled via a rotary mechanism of the central stalk subunits to proton translocation. With the subunit c (ATP5MC1), forms the proton-conducting channel in the F(0) domain, that contains two crucial half-channels (inlet and outlet) that facilitate proton movement from the mitochondrial intermembrane space (IMS) into the matrix. Protons are taken up via the inlet half-channel and released through the outlet half-channel, following a Grotthuss mechanism. The polypeptide is ATP synthase F(0) complex subunit a (Ictidomys tridecemlineatus (Thirteen-lined ground squirrel)).